We begin with the raw amino-acid sequence, 551 residues long: MKSAPFLFLLGLLGLVTAQTQDPALLDLLRENPDLLSLLLQSNEHRAPLVKPNVVLLVADHMGSGDLTSYGHPTQEAGFIDKMAAEGLRFTNGYVGDAVCTPSRSAIMTGRLPVRIGTFGETRVFLPWTKTGLPKSELTIAEAMKEAGYATGMVGKWHLGINENSSTDGAHLPFNHGFDFVGHNLPFTNSWSCDDTGLHKDFPDSQRCYLYVNATLVSQPYQHKGLTQLFTDDALGFIEDNHADPFFLYVAFAHMHTSLFSSDDFSCTSRRGRYGDNLLEMHDAVQKIVDKLEENNISENTIIFFISDHGPHREYCEEGGDASIFRGGKSHSWEGGHRIPYIVYWPGTISPGISNEIVTSMDIIATAADLGGTTLPTDRIYDGKSIKDVLLEGSASPHSSFFYYCKDNLMAVRVGKYKAHFRTQRVRSQDEYGLECAGGFPLEDYFDCNDCEGDCVTEHDPPLLFDLHRDPGEAYPLEACGHEDVFLTVKSTVEEHKAALVKGTPLLDSFDHSIVPCCNPANGCICNYVHEPGMPECYQDQVATAARHYRP.

The signal sequence occupies residues 1–20 (MKSAPFLFLLGLLGLVTAQT). Gln21 bears the Blocked amino end (Gln) mark. Ca(2+) contacts are provided by Asp60, His61, and Cys100. Residue Cys100 is the Nucleophile of the active site. Cys100 bears the 3-oxoalanine (Cys) mark. Residue His158 is part of the active site. Residues Asn164, Asn213, and Asn296 are each glycosylated (N-linked (GlcNAc...) asparagine). Residues Asp308 and His309 each contribute to the Ca(2+) site.

It belongs to the sulfatase family. Ca(2+) is required as a cofactor. Post-translationally, the conversion to 3-oxoalanine (also known as C-formylglycine, FGly), of a serine or cysteine residue in prokaryotes and of a cysteine residue in eukaryotes, is critical for catalytic activity.

It localises to the cytoplasm. It is found in the secreted. The protein resides in the extracellular space. Its subcellular location is the extracellular matrix. The enzyme catalyses an aryl sulfate + H2O = a phenol + sulfate + H(+). Functionally, may be a structural component of the extracellular matrices involved in cell movement during morphogenesis. The polypeptide is Arylsulfatase (Hemicentrotus pulcherrimus (Sea urchin)).